Consider the following 164-residue polypeptide: CASP-like protein 1C2 (164 aa).

Residues 1–8 (MVKLTQRL) are Cytoplasmic-facing. A helical transmembrane segment spans residues 9–29 (GGLVLRFAAFCAALGAVIAMI). Residues 30–51 (TSRERSSFFVISLVAKYSDLAA) are Extracellular-facing. The helical transmembrane segment at 52 to 72 (FKYFVIANAIVTVYSFLVLFL) threads the bilayer. The Cytoplasmic segment spans residues 73–80 (PKESLLWK). The chain crosses the membrane as a helical span at residues 81–101 (FVVVLDLMVTMLLTSSLSAAV). Over 102–129 (AVAQVGKRGNANAGWLPICGQVPRFCDQ) the chain is Extracellular. A helical membrane pass occupies residues 130-150 (ITGALIAGLVALVLYVFLLIF). Topologically, residues 151-164 (SIHHVVDPFLLRKS) are cytoplasmic.

This sequence belongs to the Casparian strip membrane proteins (CASP) family. In terms of assembly, homodimer and heterodimers.

The protein localises to the cell membrane. The polypeptide is CASP-like protein 1C2 (Arabidopsis thaliana (Mouse-ear cress)).